The chain runs to 60 residues: Small, acid-soluble spore protein 1 (60 aa).

This sequence belongs to the alpha/beta-type SASP family. In terms of processing, SASP are degraded in the first minutes of spore germination and provide amino acids for both new protein synthesis and metabolism.

In terms of biological role, SASP are bound to spore DNA. They are double-stranded DNA-binding proteins that cause DNA to change to an a-like conformation. They protect the DNA backbone from chemical and enzymatic cleavage and are thus involved in dormant spore's high resistance to UV light. The protein is Small, acid-soluble spore protein 1 (ssp1) of Clostridium perfringens (strain 13 / Type A).